Reading from the N-terminus, the 100-residue chain is Non-histone chromosomal protein HMG-14 (100 aa).

Positions 1-100 (MPKRKVSSAE…EAGEKEAKSD (100 aa)) are disordered. Position 7 is an ADP-ribosylserine (S7). S8 is modified (phosphoserine). The residue at position 14 (K14) is an N6-acetyllysine. S21 bears the Phosphoserine; by RPS6KA5 mark. ADP-ribosylserine; alternate is present on S25. Position 25 is a phosphoserine; alternate; by RPS6KA5 (S25). An N6-acetyllysine modification is found at K27. Composition is skewed to basic and acidic residues over residues 30-50 (AKVEAKPKKAAAKDKSSDKKV) and 69-85 (ETKEDLPAENGETKTEE). T81 bears the Phosphothreonine mark. K82 carries the post-translational modification N6-acetyllysine. Residues S86, S89, and S99 each carry the phosphoserine modification.

Interacts with transcriptional regulator SEHBP. Post-translationally, phosphorylation on Ser-21 and Ser-25 weakens binding to nucleosomes and increases the rate of H3 phosphorylation. Phosphorylation favors cytoplasmic localization.

The protein resides in the nucleus. The protein localises to the cytoplasm. Binds to the inner side of the nucleosomal DNA thus altering the interaction between the DNA and the histone octamer. May be involved in the process which maintains transcribable genes in a unique chromatin conformation. Inhibits the phosphorylation of nucleosomal histones H3 and H2A by RPS6KA5/MSK1 and RPS6KA3/RSK2. This is Non-histone chromosomal protein HMG-14 (HMGN1) from Homo sapiens (Human).